A 263-amino-acid polypeptide reads, in one-letter code: H-2 class II histocompatibility antigen, A-K beta chain (263 aa).

Positions 1-27 are cleaved as a signal peptide; that stretch reads MALQIPSLLLLAAVVVLTVLSSPGTEG. Residues 28–120 form a beta-1 region; that stretch reads GNSERHFVHQ…TETPTSLRRL (93 aa). Topologically, residues 28 to 224 are extracellular; sequence GNSERHFVHQ…RAQSESARSK (197 aa). Disulfide bonds link Cys-42/Cys-104 and Cys-143/Cys-199. The N-linked (GlcNAc...) asparagine glycan is linked to Asn-46. The beta-2 stretch occupies residues 121–214; sequence EQPSVVISLS…SLKSPITVEW (94 aa). In terms of domain architecture, Ig-like C1-type spans 123–211; that stretch reads PSVVISLSRT…EHPSLKSPIT (89 aa). Positions 215 to 224 are connecting peptide; sequence RAQSESARSK. Residues 225 to 245 form a helical membrane-spanning segment; that stretch reads MLSGIGGCVLGVIFLGLGLFI. Residues 246–263 lie on the Cytoplasmic side of the membrane; it reads RHRSQKGPRGPPPAGLLQ.

The protein belongs to the MHC class II family. Post-translationally, ubiquitinated in immature dendritic cells leading to down-regulation of MHC class II.

The protein resides in the membrane. The sequence is that of H-2 class II histocompatibility antigen, A-K beta chain (H2-Ab1) from Mus musculus (Mouse).